The following is a 453-amino-acid chain: Bifunctional protein GlmU (453 aa).

The interval 1–226 is pyrophosphorylase; it reads MKFSAVILAA…AIEVEGVNDR (226 aa). Residues 8 to 11, K22, Q73, 78 to 79, 100 to 102, G137, E151, N166, and N224 each bind UDP-N-acetyl-alpha-D-glucosamine; these read LAAG, GT, and YGD. D102 serves as a coordination point for Mg(2+). N224 contacts Mg(2+). The tract at residues 227–247 is linker; the sequence is AQLARLERAFQSMQAQKLLEQ. Residues 248-453 are N-acetyltransferase; sequence GVMLRDPARF…TGWQRPVKQK (206 aa). Positions 330 and 348 each coordinate UDP-N-acetyl-alpha-D-glucosamine. H360 (proton acceptor) is an active-site residue. UDP-N-acetyl-alpha-D-glucosamine contacts are provided by Y363 and N374. Residues A377, 383–384, S402, A420, and R437 contribute to the acetyl-CoA site; that span reads NY.

It in the N-terminal section; belongs to the N-acetylglucosamine-1-phosphate uridyltransferase family. In the C-terminal section; belongs to the transferase hexapeptide repeat family. Homotrimer. Requires Mg(2+) as cofactor.

It localises to the cytoplasm. The catalysed reaction is alpha-D-glucosamine 1-phosphate + acetyl-CoA = N-acetyl-alpha-D-glucosamine 1-phosphate + CoA + H(+). The enzyme catalyses N-acetyl-alpha-D-glucosamine 1-phosphate + UTP + H(+) = UDP-N-acetyl-alpha-D-glucosamine + diphosphate. Its pathway is nucleotide-sugar biosynthesis; UDP-N-acetyl-alpha-D-glucosamine biosynthesis; N-acetyl-alpha-D-glucosamine 1-phosphate from alpha-D-glucosamine 6-phosphate (route II): step 2/2. The protein operates within nucleotide-sugar biosynthesis; UDP-N-acetyl-alpha-D-glucosamine biosynthesis; UDP-N-acetyl-alpha-D-glucosamine from N-acetyl-alpha-D-glucosamine 1-phosphate: step 1/1. It participates in bacterial outer membrane biogenesis; LPS lipid A biosynthesis. In terms of biological role, catalyzes the last two sequential reactions in the de novo biosynthetic pathway for UDP-N-acetylglucosamine (UDP-GlcNAc). The C-terminal domain catalyzes the transfer of acetyl group from acetyl coenzyme A to glucosamine-1-phosphate (GlcN-1-P) to produce N-acetylglucosamine-1-phosphate (GlcNAc-1-P), which is converted into UDP-GlcNAc by the transfer of uridine 5-monophosphate (from uridine 5-triphosphate), a reaction catalyzed by the N-terminal domain. The sequence is that of Bifunctional protein GlmU from Vibrio campbellii (strain ATCC BAA-1116).